The sequence spans 344 residues: Mycothiol acetyltransferase (344 aa).

Glu-36 is a 1D-myo-inositol 2-(L-cysteinylamino)-2-deoxy-alpha-D-glucopyranoside binding site. N-acetyltransferase domains lie at 40-179 and 187-344; these read LALR…TPLP and VTVR…PSTG. A disordered region spans residues 61–83; sequence ADTSGPNVPDTPGDQNAADTSTM. The span at 73 to 83 shows a compositional bias: polar residues; the sequence is GDQNAADTSTM. 109–111 is a binding site for acetyl-CoA; it reads VVV. 3 residues coordinate 1D-myo-inositol 2-(L-cysteinylamino)-2-deoxy-alpha-D-glucopyranoside: Glu-214, Lys-253, and Glu-272. Acetyl-CoA-binding positions include 276–278 and 283–289; these read VGV and GGAGLGR. 1D-myo-inositol 2-(L-cysteinylamino)-2-deoxy-alpha-D-glucopyranoside is bound at residue Tyr-310. Residue 315 to 320 participates in acetyl-CoA binding; it reads NVRAVR.

This sequence belongs to the acetyltransferase family. MshD subfamily. Monomer.

The enzyme catalyses 1D-myo-inositol 2-(L-cysteinylamino)-2-deoxy-alpha-D-glucopyranoside + acetyl-CoA = mycothiol + CoA + H(+). Its function is as follows. Catalyzes the transfer of acetyl from acetyl-CoA to desacetylmycothiol (Cys-GlcN-Ins) to form mycothiol. The polypeptide is Mycothiol acetyltransferase (Frankia casuarinae (strain DSM 45818 / CECT 9043 / HFP020203 / CcI3)).